Reading from the N-terminus, the 563-residue chain is F-box/kelch-repeat protein At5g42360 (563 aa).

In terms of domain architecture, F-box spans 129-175; it reads YRKHVYLPDDILEMCLMRLPLTSLLNAHLVCKKWQSMANTQRFLQMR. Kelch repeat units lie at residues 184 to 231, 232 to 282, and 355 to 402; these read WLFL…SIHE, EIYI…ATEV, and VLIA…IICN.

The sequence is that of F-box/kelch-repeat protein At5g42360 from Arabidopsis thaliana (Mouse-ear cress).